A 96-amino-acid chain; its full sequence is Aspartyl/glutamyl-tRNA(Asn/Gln) amidotransferase subunit C (96 aa).

This sequence belongs to the GatC family. In terms of assembly, heterotrimer of A, B and C subunits.

It catalyses the reaction L-glutamyl-tRNA(Gln) + L-glutamine + ATP + H2O = L-glutaminyl-tRNA(Gln) + L-glutamate + ADP + phosphate + H(+). It carries out the reaction L-aspartyl-tRNA(Asn) + L-glutamine + ATP + H2O = L-asparaginyl-tRNA(Asn) + L-glutamate + ADP + phosphate + 2 H(+). Functionally, allows the formation of correctly charged Asn-tRNA(Asn) or Gln-tRNA(Gln) through the transamidation of misacylated Asp-tRNA(Asn) or Glu-tRNA(Gln) in organisms which lack either or both of asparaginyl-tRNA or glutaminyl-tRNA synthetases. The reaction takes place in the presence of glutamine and ATP through an activated phospho-Asp-tRNA(Asn) or phospho-Glu-tRNA(Gln). The polypeptide is Aspartyl/glutamyl-tRNA(Asn/Gln) amidotransferase subunit C (Wolinella succinogenes (strain ATCC 29543 / DSM 1740 / CCUG 13145 / JCM 31913 / LMG 7466 / NCTC 11488 / FDC 602W) (Vibrio succinogenes)).